Here is a 288-residue protein sequence, read N- to C-terminus: 4-diphosphocytidyl-2-C-methyl-D-erythritol kinase (288 aa).

The active site involves K10. ATP is bound at residue 99 to 109; sequence PMGGGLGGGSS. D141 is an active-site residue.

This sequence belongs to the GHMP kinase family. IspE subfamily. As to quaternary structure, homodimer.

The enzyme catalyses 4-CDP-2-C-methyl-D-erythritol + ATP = 4-CDP-2-C-methyl-D-erythritol 2-phosphate + ADP + H(+). It participates in isoprenoid biosynthesis; isopentenyl diphosphate biosynthesis via DXP pathway; isopentenyl diphosphate from 1-deoxy-D-xylulose 5-phosphate: step 3/6. Catalyzes the phosphorylation of the position 2 hydroxy group of 4-diphosphocytidyl-2C-methyl-D-erythritol. The polypeptide is 4-diphosphocytidyl-2-C-methyl-D-erythritol kinase (Serratia proteamaculans (strain 568)).